The following is a 96-amino-acid chain: UPF0235 protein YggU (96 aa).

It belongs to the UPF0235 family.

This is UPF0235 protein YggU from Salmonella newport (strain SL254).